A 7603-amino-acid polypeptide reads, in one-letter code: Cysteine repeat modular protein B (7603 aa).

Residue Asn-172 is glycosylated (N-linked (GlcNAc...) asparagine). A helical membrane pass occupies residues 223 to 243 (LVGFFLVPVFVVFFVLSSDAT). 2 disordered regions span residues 248–275 (GVGV…SSPG) and 291–323 (RDTK…GKGF). The segment covering 263 to 275 (SVSSSSRASSSPG) has biased composition (low complexity). Basic residues predominate over residues 302–313 (SSRRSARARRRR). 6 N-linked (GlcNAc...) asparagine glycosylation sites follow: Asn-329, Asn-589, Asn-848, Asn-1128, Asn-1183, and Asn-1402. The disordered stretch occupies residues 1554 to 1574 (VLRSRSGPSHPSSVSQPSPSF). A compositionally biased stretch (low complexity) spans 1557–1573 (SRSGPSHPSSVSQPSPS). N-linked (GlcNAc...) asparagine glycans are attached at residues Asn-1622, Asn-2578, Asn-2664, Asn-3094, and Asn-3126. Residues 3316-3445 (SNAVPEADEN…SDLTTSQPED (130 aa)) are disordered. Over residues 3321–3340 (EADENQVESAEPEQNAEGET) the composition is skewed to acidic residues. Residues 3342 to 3360 (EQGAEEAGGNAAEPGAESG) show a composition bias toward low complexity. Residues Asn-3546, Asn-4367, Asn-4823, Asn-4901, Asn-5186, Asn-5546, and Asn-5666 are each glycosylated (N-linked (GlcNAc...) asparagine). Residues 5758–5799 (LAESRSDDGTVGDDVDLDDNALSGTTNSGWTTSSSNSERVRK) are disordered. Residues 5767–5776 (TVGDDVDLDD) are compositionally biased toward acidic residues. The segment covering 5780–5794 (SGTTNSGWTTSSSNS) has biased composition (low complexity). N-linked (GlcNAc...) asparagine glycans are attached at residues Asn-5806, Asn-5876, Asn-5998, Asn-6055, and Asn-6369. The tract at residues 6043-6115 (GEADHTPADG…EASEAESVSA (73 aa)) is disordered. The segment covering 6051–6060 (DGSSNSSEDS) has biased composition (polar residues). Over residues 6391–6405 (EFTDTGPAPDDHTDE) the composition is skewed to basic and acidic residues. The segment at 6391-6436 (EFTDTGPAPDDHTDEGGANLDSTGGSGEPSSSAPVDPSGENEGQLL) is disordered. The segment covering 6410–6423 (LDSTGGSGEPSSSA) has biased composition (polar residues). An N-linked (GlcNAc...) asparagine glycan is attached at Asn-6453. A run of 8 helical transmembrane segments spans residues 6520-6540 (IFIL…ALTI), 6552-6572 (VLIR…LMPA), 6578-6598 (LAGW…ALHP), 6627-6647 (IFVP…CVAT), 6770-6790 (LILG…GFVA), 6831-6851 (CVAL…QEIF), 6888-6908 (GLMV…FEVF), and 6912-6932 (GAIP…SLFV). The N-linked (GlcNAc...) asparagine glycan is linked to Asn-7013. A helical membrane pass occupies residues 7017–7037 (FVAALSDSLSQLVIAWCQFTI). Asn-7061 carries N-linked (GlcNAc...) asparagine glycosylation. Residues 7174–7242 (APQLRKENHA…RGLIESEIDD (69 aa)) are a coiled coil. Residues 7379–7603 (AAPAAGLRSH…LKKPGSPKQE (225 aa)) form a disordered region. A compositionally biased stretch (polar residues) spans 7408–7417 (LGTNLSTPSA). Residue Asn-7411 is glycosylated (N-linked (GlcNAc...) asparagine). Low complexity-rich tracts occupy residues 7474–7496 (PTPS…SVTP), 7509–7541 (SEAP…SSDL), and 7560–7582 (GEAA…AAQP).

As to quaternary structure, component of a complex, at least composed of cysteine repeat modular protein A (CRMPa), cysteine repeat modular protein B (CRMPb), micronemal protein 15 (MIC15) and thrombospondin type 1 domain-containing protein (TSP1).

The protein localises to the cell membrane. The protein resides in the endoplasmic reticulum. It localises to the golgi apparatus. Its function is as follows. Required for triggering rhoptry secretion. Plays a role in host cell invasion. The sequence is that of Cysteine repeat modular protein B from Toxoplasma gondii.